The primary structure comprises 182 residues: UPF0397 protein BCAH187_A2708 (182 aa).

5 helical membrane-spanning segments follow: residues 9-29 (VVAI…GFSI), 40-60 (AILT…IGLI), 71-91 (WGIW…MGFI), 114-134 (ITGL…DIIV), and 142-162 (IVIQ…VLGL).

The protein belongs to the UPF0397 family.

It is found in the cell membrane. This is UPF0397 protein BCAH187_A2708 from Bacillus cereus (strain AH187).